The following is a 106-amino-acid chain: UPF0473 protein LSEI_0788 (106 aa).

It belongs to the UPF0473 family.

In Lacticaseibacillus paracasei (strain ATCC 334 / BCRC 17002 / CCUG 31169 / CIP 107868 / KCTC 3260 / NRRL B-441) (Lactobacillus paracasei), this protein is UPF0473 protein LSEI_0788.